Consider the following 505-residue polypeptide: Kinesin light chain 3 (505 aa).

Residues 1–20 (MSVQVAAPGGLGLGLERPSP) are disordered. Positions 88 to 150 (LLALSAHVGA…EEEKSHLEFL (63 aa)) form a coiled coil. Residues 157–193 (DPPAESQQPESPPRRDSLASLFPSEEEERRGPEAVGA) are disordered. A Phosphoserine modification is found at serine 173. 5 TPR repeats span residues 207–240 (LRTLHNLVIQYAGQGRYEVAVPLCRQALEDLERS), 249–282 (ATMLNILALVYRDQNKYKEATDLLHDALQIREQT), 291–324 (AATLNNLAVLYGKRGRYREAEPLCQRALEIREKV), 333–366 (AKQLNNLALLCQNQGKFEEVERHYARALSIYEAL), and 375–408 (AKTKNNLASAYLKQNKYQQAEELYKEILHREALP). The disordered stretch occupies residues 409–505 (APLGAPNTGT…STSTQDLGPR (97 aa)). A compositionally biased stretch (low complexity) spans 416 to 434 (TGTTSDTQQQTLSRSSSFS). Positions 435–453 (KLRESIRRGSEKLVSRLRG) are enriched in basic and acidic residues. Phosphoserine is present on serine 467. Residues 489–505 (SEASRTLSTSTQDLGPR) are compositionally biased toward polar residues. Threonine 499 is subject to Phosphothreonine.

It belongs to the kinesin light chain family. In terms of assembly, oligomer composed of two heavy chains and two light chains. Associates with microtubulin in an ATP-dependent manner. Interacts with KIF5C. Interacts with ODF1. Interacts with LRGUK. Interacts with VDAC2.

The protein resides in the cytoplasm. The protein localises to the cytoskeleton. It localises to the mitochondrion. In terms of biological role, kinesin is a microtubule-associated force-producing protein that may play a role in organelle transport. Plays a role during spermiogenesis in the development of the sperm tail midpiece and in the normal function of spermatozoa. May play a role in the formation of the mitochondrial sheath formation in the developing spermatid midpiece. This is Kinesin light chain 3 (KLC3) from Bos taurus (Bovine).